The following is a 146-amino-acid chain: Ribonuclease H (146 aa).

The RNase H type-1 domain maps to 1–136 (MKHIEIYTDG…CDTLAREAAL (136 aa)). Mg(2+) contacts are provided by Asp-9, Glu-47, Asp-69, and Asp-128.

The protein belongs to the RNase H family. In terms of assembly, monomer. Mg(2+) serves as cofactor.

It is found in the cytoplasm. It catalyses the reaction Endonucleolytic cleavage to 5'-phosphomonoester.. Functionally, endonuclease that specifically degrades the RNA of RNA-DNA hybrids. This Campylobacter jejuni subsp. jejuni serotype O:23/36 (strain 81-176) protein is Ribonuclease H.